Here is a 1305-residue protein sequence, read N- to C-terminus: Serine protease EspC (1305 aa).

The first 53 residues, 1–53 (MNKIYALKYCHATGGLIAVSELASRVMKKAARGSLLALFNLSLYGAFLSASQA), serve as a signal peptide directing secretion. A Peptidase S6 domain is found at 55-297 (QLNIDNVWAR…SILNQYDENT (243 aa)). Residues H125, D153, and S256 each act as charge relay system in the active site. An Autotransporter domain is found at 1039-1305 (DTQGDAGVWA…AINANFRYSF (267 aa)).

Cleaved to release the mature protein from the outer membrane.

It is found in the periplasm. The protein localises to the secreted. The protein resides in the cell surface. It localises to the cell outer membrane. With respect to regulation, inhibition of cytotoxic activity by phenylmethylsulfonyl fluoride. Serine protease with enterotoxic and cytotoxic activities. Cleaves fodrin, but does not cause its redistribution within epithelial cells. The exact role of EspC in EPEC pathogenesis is still unknown. The protein is Serine protease EspC (espC) of Escherichia coli O127:H6 (strain E2348/69 / EPEC).